We begin with the raw amino-acid sequence, 443 residues long: Ribosomal protein uS12 methylthiotransferase RimO (443 aa).

The MTTase N-terminal domain occupies 8–118 (PKVGFVSLGC…VVNAVHEVVP (111 aa)). [4Fe-4S] cluster contacts are provided by Cys17, Cys53, Cys82, Cys151, Cys155, and Cys158. Residues 137-376 (LTPRHYAYLK…AHQQAISSAR (240 aa)) enclose the Radical SAM core domain. The 66-residue stretch at 378–443 (QLRIGKEIEV…DEYDMWAEPV (66 aa)) folds into the TRAM domain.

The protein belongs to the methylthiotransferase family. RimO subfamily. It depends on [4Fe-4S] cluster as a cofactor.

Its subcellular location is the cytoplasm. The enzyme catalyses L-aspartate(89)-[ribosomal protein uS12]-hydrogen + (sulfur carrier)-SH + AH2 + 2 S-adenosyl-L-methionine = 3-methylsulfanyl-L-aspartate(89)-[ribosomal protein uS12]-hydrogen + (sulfur carrier)-H + 5'-deoxyadenosine + L-methionine + A + S-adenosyl-L-homocysteine + 2 H(+). Its function is as follows. Catalyzes the methylthiolation of an aspartic acid residue of ribosomal protein uS12. The chain is Ribosomal protein uS12 methylthiotransferase RimO from Pseudomonas putida (strain W619).